Consider the following 1606-residue polypeptide: Fatty acid synthase apf5 (1606 aa).

Positions 142-218 (VPVSAILISL…ETLSTSHDGQ (77 aa)) constitute a Carrier domain. Ser177 is subject to O-(pantetheine 4'-phosphoryl)serine. The region spanning 996 to 1539 (KESLIEVALQ…QKGGQALLVH (544 aa)) is the Ketosynthase family 3 (KS3) domain. Residues Cys1182, His1424, and His1465 each act as for beta-ketoacyl synthase activity in the active site.

Belongs to the thiolase-like superfamily. Fungal fatty acid synthetase subunit alpha family.

It carries out the reaction a fatty acyl-[ACP] + malonyl-[ACP] + H(+) = a 3-oxoacyl-[ACP] + holo-[ACP] + CO2. It participates in secondary metabolite biosynthesis. In terms of biological role, fatty acid synthase; part of the gene cluster that mediates the biosynthesis of the cyclic tetrapeptide apicidin F (APF). The non-ribosomal peptide synthetase apf1 incorporates four different amino acids to produce apicidin F: L-phenylalanine, D-pipecolic acid (D-pip), N-methoxy-L-tryptophan and L-2-aminooctanedioic acid. L-Phenylalanine is the only proteinogenic amino acid directly used by apf1. The 3 other apf1 substrates are non-proteinogenic and have to be modified by other enzymes of the cluster. Lysine is converted to delta-1-pyrroline-5-carboxylate (P5C) which is reduced to L-pipecolic acid (L-pip) by apf3. L-pip is epimerized to D-pip, probably by apf1 activity, prior to incorporation. L-Tryptophan is N-oxidyzed by one of the cytochrome P450 monooxygenases (apf7 or apf8), and further methylated at the hydroxy group by the O-methyltransferase apf6 to yield N-methoxy-L-tryptophan. The synthesis of the fourth apf1 substrate is more complex. The fatty acid synthase apf5 is involved in the synthesis of the octanoic acid backbone of L-2-aminooctanedioic acid by fixing one acetyl-CoA unit and three malonyl-CoA units. Then one of the cytochrome P450 monooxygenases (apf7 or apf8) may oxidize this backbone to 2-oxooctanoic acid. The aminotransferase apf4 is predicted to catalyze the exchange of the keto group with an amino group. The next step would be the oxidation of 2-aminooctanoic acid by one of the cytochrome P450 monooxygenases (apf7 or apf8). The last step is the oxidation of 2-amino-8-hydroxyoctanoic acid to 2-aminooctanedioic acid is catalyzed by the FAD-dependent monooxygenase apf9. This is Fatty acid synthase apf5 from Gibberella fujikuroi (strain CBS 195.34 / IMI 58289 / NRRL A-6831) (Bakanae and foot rot disease fungus).